Here is a 264-residue protein sequence, read N- to C-terminus: 3-deoxy-manno-octulosonate cytidylyltransferase (264 aa).

It belongs to the KdsB family.

It is found in the cytoplasm. The catalysed reaction is 3-deoxy-alpha-D-manno-oct-2-ulosonate + CTP = CMP-3-deoxy-beta-D-manno-octulosonate + diphosphate. It participates in nucleotide-sugar biosynthesis; CMP-3-deoxy-D-manno-octulosonate biosynthesis; CMP-3-deoxy-D-manno-octulosonate from 3-deoxy-D-manno-octulosonate and CTP: step 1/1. It functions in the pathway bacterial outer membrane biogenesis; lipopolysaccharide biosynthesis. Activates KDO (a required 8-carbon sugar) for incorporation into bacterial lipopolysaccharide in Gram-negative bacteria. This chain is 3-deoxy-manno-octulosonate cytidylyltransferase, found in Methylibium petroleiphilum (strain ATCC BAA-1232 / LMG 22953 / PM1).